A 271-amino-acid chain; its full sequence is uncharacterized protein (271 aa).

This is an uncharacterized protein from Azospirillum brasilense.